Reading from the N-terminus, the 47-residue chain is MTLRDSCTTSLKGGPRRFPLRNFSLFTFCKQRNNNKNDKIHLFMYCT.

This is an uncharacterized protein from Saccharomyces cerevisiae (strain ATCC 204508 / S288c) (Baker's yeast).